A 257-amino-acid polypeptide reads, in one-letter code: Caspase-14 (257 aa).

Residues H93 and C136 contribute to the active site. Residues D156–L167 constitute a propeptide that is removed on maturation.

Belongs to the peptidase C14A family. As to quaternary structure, heterodimer of a large and a small subunit, both processed from the precursor; the mature active form is a p17/p10 dimer and the intermediate form a p20/p8 dimer. Maturation by proteolytic processing appears to be a two-step process. The precursor is processed by KLK7 to yield the p20/p8 intermediate form which acts the precursor to yield the p17/p10 mature form. Initially it was reported that cleavage by granzyme B, caspase-8 and -10 generates the two active subunits, however the physiological relevance has not been established. As to expression, embryo, adult liver and less in adult brain and kidney. Expressed in differentiating keratinocytes of embryonic skin (at protein level). Expressed in keratinocytes of adult skin suprabasal layers (at protein level).

It is found in the cytoplasm. It localises to the nucleus. In terms of biological role, non-apoptotic caspase which is involved in epidermal differentiation. Seems to play a role in keratinocyte differentiation and is required for cornification. Regulates maturation of the epidermis by proteolytically processing filaggrin. In vitro is equally active on the synthetic caspase substrates WEHD-ACF and IETD-AFC. Involved in processing of prosaposin in the epidermis. May be involved in retinal pigment epithelium cell barrier function. This is Caspase-14 (Casp14) from Mus musculus (Mouse).